A 321-amino-acid chain; its full sequence is GTP 3',8-cyclase (321 aa).

The region spanning 5 to 233 (SFNRVIDYIR…QGSSKIYTLE (229 aa)) is the Radical SAM core domain. Arginine 14 contacts GTP. 2 residues coordinate [4Fe-4S] cluster: cysteine 21 and cysteine 25. Tyrosine 27 contributes to the S-adenosyl-L-methionine binding site. Cysteine 28 serves as a coordination point for [4Fe-4S] cluster. Arginine 64 provides a ligand contact to GTP. Glycine 68 serves as a coordination point for S-adenosyl-L-methionine. Serine 95 is a GTP binding site. Serine 119 provides a ligand contact to S-adenosyl-L-methionine. Lysine 155 provides a ligand contact to GTP. Residue methionine 189 participates in S-adenosyl-L-methionine binding. The [4Fe-4S] cluster site is built by cysteine 249 and cysteine 252. 254–256 (RIR) lines the GTP pocket. Cysteine 266 provides a ligand contact to [4Fe-4S] cluster.

Belongs to the radical SAM superfamily. MoaA family. In terms of assembly, monomer and homodimer. Requires [4Fe-4S] cluster as cofactor.

It catalyses the reaction GTP + AH2 + S-adenosyl-L-methionine = (8S)-3',8-cyclo-7,8-dihydroguanosine 5'-triphosphate + 5'-deoxyadenosine + L-methionine + A + H(+). Its pathway is cofactor biosynthesis; molybdopterin biosynthesis. In terms of biological role, catalyzes the cyclization of GTP to (8S)-3',8-cyclo-7,8-dihydroguanosine 5'-triphosphate. The chain is GTP 3',8-cyclase from Helicobacter pylori (strain ATCC 700392 / 26695) (Campylobacter pylori).